We begin with the raw amino-acid sequence, 236 residues long: MIVQLDPASISFPPAATALHEPNGLLAVGGDLSPGRLIHAYQQGIFPWFSESDPILWWSPNPRAVFFPDQIHTSRSLAKTNRKPNWQMSINCNFAEVVRACADERADKEGTWITEEMIEAYCKLHQLGYAHSVEIWFDNELAGGLYGISVGRAFCGESMFHYKTDASKIALLRFAQYFKKHGGQLIDCQVGNPHLFSLGAVNLHRERFLMKLNIAQQKKMPDTFWQARELPLPGEL.

This sequence belongs to the L/F-transferase family.

Its subcellular location is the cytoplasm. The enzyme catalyses N-terminal L-lysyl-[protein] + L-leucyl-tRNA(Leu) = N-terminal L-leucyl-L-lysyl-[protein] + tRNA(Leu) + H(+). It carries out the reaction N-terminal L-arginyl-[protein] + L-leucyl-tRNA(Leu) = N-terminal L-leucyl-L-arginyl-[protein] + tRNA(Leu) + H(+). It catalyses the reaction L-phenylalanyl-tRNA(Phe) + an N-terminal L-alpha-aminoacyl-[protein] = an N-terminal L-phenylalanyl-L-alpha-aminoacyl-[protein] + tRNA(Phe). Its function is as follows. Functions in the N-end rule pathway of protein degradation where it conjugates Leu, Phe and, less efficiently, Met from aminoacyl-tRNAs to the N-termini of proteins containing an N-terminal arginine or lysine. The polypeptide is Leucyl/phenylalanyl-tRNA--protein transferase (Idiomarina loihiensis (strain ATCC BAA-735 / DSM 15497 / L2-TR)).